The sequence spans 500 residues: Putative (R)-citramalate synthase CimA (500 aa).

Residues 9 to 258 (LRFFDTTLRD…DTRIRTERLY (250 aa)) form the Pyruvate carboxyltransferase domain.

This sequence belongs to the alpha-IPM synthase/homocitrate synthase family. As to quaternary structure, homodimer.

It carries out the reaction pyruvate + acetyl-CoA + H2O = (3R)-citramalate + CoA + H(+). It functions in the pathway amino-acid biosynthesis; L-isoleucine biosynthesis; 2-oxobutanoate from pyruvate: step 1/3. Catalyzes the condensation of pyruvate and acetyl-coenzyme A to form (R)-citramalate. This Methanosphaerula palustris (strain ATCC BAA-1556 / DSM 19958 / E1-9c) protein is Putative (R)-citramalate synthase CimA.